The primary structure comprises 480 residues: MNTHPQTSPNTHYKIADISLADWGRKEIDIAEHEMPGLMSIRRKYASKQPLKGVRVTGSLHMTIQTAVLIETLKDIGADVRWASCNIFSTQDHAAAAIATSGTPVFAWKGETLEEYWDCTLQALTFTLADGTLTGPELIVDDGGDATLLIHKGYELENGSTWVDEPSDSLEEQVIKRLLKRIAIERPGYWTRVVNDWKGVSEETTTGVHRLYQIAATGRLLVPAINVNDSVTKSKFDNLYGCRESLADGLKRAMDVMLAGKLAVVCGYGDVGKGSAHSLRAYGARVIVTEIDPICALQAAMEGFEVTTVEDTLGQADIYVTTTGNKDVIRIEHMTAMKDQVIVCNIGHFDNEIQVDALNALTGVQKINIKPQVDKFILPNGNTLFLLAEGRLVNLGCATGHPSFVMSNSFANQTLAQIDLWQNKDVYEKNVYRLPKKLDEEVARLHLEKIGVKLTTLTANQAAYLGISVEGPFKPEHYRY.

Residues Thr-63, Asp-142, and Glu-203 each coordinate substrate. An NAD(+)-binding site is contributed by 204–206 (TTT). Substrate is bound by residues Lys-233 and Asp-237. NAD(+)-binding positions include Asn-238, 267–272 (GYGDVG), Glu-290, Asn-325, 346–348 (IGH), and Asn-394.

Belongs to the adenosylhomocysteinase family. NAD(+) serves as cofactor.

The protein localises to the cytoplasm. The catalysed reaction is S-adenosyl-L-homocysteine + H2O = L-homocysteine + adenosine. Its pathway is amino-acid biosynthesis; L-homocysteine biosynthesis; L-homocysteine from S-adenosyl-L-homocysteine: step 1/1. Its function is as follows. May play a key role in the regulation of the intracellular concentration of adenosylhomocysteine. This chain is Adenosylhomocysteinase, found in Xylella fastidiosa (strain Temecula1 / ATCC 700964).